Here is a 31-residue protein sequence, read N- to C-terminus: Photosystem II reaction center protein T (31 aa).

A helical transmembrane segment spans residues 3 to 23 (ALVYTFLLVGTLGIIFFSIFF).

The protein belongs to the PsbT family. In terms of assembly, PSII is composed of 1 copy each of membrane proteins PsbA, PsbB, PsbC, PsbD, PsbE, PsbF, PsbH, PsbI, PsbJ, PsbK, PsbL, PsbM, PsbT, PsbY, PsbZ, Psb30/Ycf12, at least 3 peripheral proteins of the oxygen-evolving complex and a large number of cofactors. It forms dimeric complexes.

Its subcellular location is the plastid. The protein localises to the chloroplast thylakoid membrane. Found at the monomer-monomer interface of the photosystem II (PS II) dimer, plays a role in assembly and dimerization of PSII. PSII is a light-driven water plastoquinone oxidoreductase, using light energy to abstract electrons from H(2)O, generating a proton gradient subsequently used for ATP formation. In Bigelowiella natans (Pedinomonas minutissima), this protein is Photosystem II reaction center protein T.